A 474-amino-acid chain; its full sequence is ATP synthase subunit beta 2 (474 aa).

G151–T158 provides a ligand contact to ATP.

It belongs to the ATPase alpha/beta chains family. As to quaternary structure, F-type ATPases have 2 components, CF(1) - the catalytic core - and CF(0) - the membrane proton channel. CF(1) has five subunits: alpha(3), beta(3), gamma(1), delta(1), epsilon(1). CF(0) has four main subunits: a(1), b(1), b'(1) and c(9-12).

The protein localises to the cell inner membrane. The enzyme catalyses ATP + H2O + 4 H(+)(in) = ADP + phosphate + 5 H(+)(out). Functionally, produces ATP from ADP in the presence of a proton gradient across the membrane. The catalytic sites are hosted primarily by the beta subunits. This is ATP synthase subunit beta 2 from Dinoroseobacter shibae (strain DSM 16493 / NCIMB 14021 / DFL 12).